The chain runs to 833 residues: Leucine--tRNA ligase (833 aa).

Residues 41–52 (PYPSGAGLHVGH) carry the 'HIGH' region motif. The short motif at 610 to 614 (KMSKS) is the 'KMSKS' region element. An ATP-binding site is contributed by K613.

This sequence belongs to the class-I aminoacyl-tRNA synthetase family.

The protein resides in the cytoplasm. It carries out the reaction tRNA(Leu) + L-leucine + ATP = L-leucyl-tRNA(Leu) + AMP + diphosphate. This chain is Leucine--tRNA ligase, found in Streptococcus agalactiae serotype Ia (strain ATCC 27591 / A909 / CDC SS700).